We begin with the raw amino-acid sequence, 359 residues long: 4-galactosyl-N-acetylglucosaminide 3-alpha-L-fucosyltransferase FUT6 (359 aa).

Topologically, residues 1 to 14 (MDPLGPAKPQWSWR) are cytoplasmic. The helical; Signal-anchor for type II membrane protein transmembrane segment at 15-34 (CCLTTLLFQLLVAVCFFSYL) threads the bilayer. The Lumenal portion of the chain corresponds to 35 to 359 (RVSRDDPTVY…QTRSIAAWFT (325 aa)). N-linked (GlcNAc...) asparagine glycosylation is found at Asn-46, Asn-91, Asn-153, and Asn-184. Positions 73–112 (KPIALPRCSEMVPGTADCNITADRKVYPQADAVIVHHREV) are determines site-specific fucosylation.

This sequence belongs to the glycosyltransferase 10 family. In terms of assembly, homodimer and monomer. Monomer (secreted form). N-glycosylated. In terms of processing, proteolytic cleavage releases a secreted glycoform of 43 kDa.

It is found in the golgi apparatus. It localises to the golgi stack membrane. Its subcellular location is the secreted. The enzyme catalyses a beta-D-galactosyl-(1-&gt;4)-N-acetyl-beta-D-glucosaminyl derivative + GDP-beta-L-fucose = a beta-D-galactosyl-(1-&gt;4)-[alpha-L-fucosyl-(1-&gt;3)]-N-acetyl-beta-D-glucosaminyl derivative + GDP + H(+). The catalysed reaction is an N-acetyl-alpha-neuraminyl-(2-&gt;3)-beta-D-galactosyl-(1-&gt;4)-N-acetyl-beta-D-glucosaminyl derivative + GDP-beta-L-fucose = an alpha-Neu5Ac-(2-&gt;3)-beta-D-Gal-(1-&gt;4)-[alpha-L-Fuc-(1-&gt;3)]-beta-D-GlcNAc derivative + GDP + H(+). It catalyses the reaction an alpha-Neu5Ac-(2-&gt;3)-beta-D-Gal-(1-&gt;4)-beta-D-GlcNAc-(1-&gt;3)-beta-D-Gal-(1-&gt;4)-[alpha-L-Fuc-(1-&gt;3)]-beta-D-GlcNAc derivative + GDP-beta-L-fucose = an alpha-Neu5Ac-(2-&gt;3)-beta-D-Gal-(1-&gt;4)-[alpha-L-Fuc-(1-&gt;3)]-beta-D-GlcNAc-(1-&gt;3)-beta-D-Gal-(1-&gt;4)-[alpha-L-Fuc-(1-&gt;3)]-beta-D-GlcNAc derivative + GDP + H(+). It carries out the reaction a neolactoside nLc6Cer + GDP-beta-L-fucose = beta-D-Gal-(1-&gt;4)-[alpha-L-Fuc-(1-&gt;3)]-beta-D-GlcNAc-(1-&gt;3)-beta-D-Gal-(1-&gt;4)-beta-D-GlcNAc-(1-&gt;3)-beta-D-Gal-(1-&gt;4)-beta-D-Glc-(1&lt;-&gt;1')-Cer + GDP + H(+). The enzyme catalyses a neolactoside nLc6Cer + GDP-beta-L-fucose = beta-D-galactosyl-(1-&gt;4)-N-acetyl-beta-D-glucosaminyl-(1-&gt;3)-beta-D-galactosyl-(1-&gt;4)-[alpha-L-fucosyl-(1-&gt;3)]-N-acetyl-beta-D-glucosaminyl-(1-&gt;3)-beta-D-galactosyl-(1-&gt;4)-beta-D-glucosyl-(1&lt;-&gt;1')-ceramide + GDP + H(+). The catalysed reaction is a neolactoside VI(3)-alpha-NeuNAc-nLc6Cer + GDP-beta-L-fucose = a neolactoside VI(3)-alpha-NeuAc,V(3)-alphaFuc-nLc6Cer + GDP + H(+). It catalyses the reaction beta-D-galactosyl-(1-&gt;4)-N-acetyl-D-glucosamine + GDP-beta-L-fucose = beta-D-galactosyl-(1-&gt;4)-[alpha-L-fucosyl-(1-&gt;3)]-N-acetyl-D-glucosamine + GDP + H(+). It carries out the reaction N-acetyl-alpha-neuraminosyl-(2-&gt;3)-beta-D-galactosyl-(1-&gt;4)-N-acetyl-beta-D-glucosamine + GDP-beta-L-fucose = N-acetyl-alpha-neuraminosyl-(2-&gt;3)-beta-D-galactosyl-(1-&gt;4)-[alpha-L-fucosyl-(1-&gt;3)]-N-acetyl-beta-D-glucosamine + GDP + H(+). The enzyme catalyses lactose + GDP-beta-L-fucose = beta-D-galactosyl-(1-&gt;4)-[alpha-L-fucosyl-(1-&gt;3)]-D-glucose + GDP + H(+). The catalysed reaction is alpha-L-Fuc-(1-&gt;2)-beta-D-Gal-(1-&gt;4)-D-Glc + GDP-beta-L-fucose = alpha-L-Fuc-(1-&gt;2)-beta-D-Gal-(1-&gt;4)-[alpha-L-Fuc-(1-&gt;3)]-D-Glc + GDP + H(+). It catalyses the reaction a beta-D-galactosyl-(1-&gt;4)-N-acetyl-beta-D-6-sulfooxy-glucosaminyl derivative + GDP-beta-L-fucose = a beta-D-galactosyl-(1-&gt;4)-[alpha-L-fucosyl-(1-&gt;3)]-N-acetyl-beta-D-6-sulfooxy-glucosaminyl derivative + GDP + H(+). It functions in the pathway protein modification; protein glycosylation. In terms of biological role, catalyzes the transfer of L-fucose, from a guanosine diphosphate-beta-L-fucose, to the N-acetyl glucosamine (GlcNAc) of a distal alpha2,3 sialylated lactosamine unit of a glycoprotein- or glycolipid-linked sialopolylactosamines chain or of a distal or internal lactosamine unit of a neutral glycoprotein- or glycolipid-linked polylactosamines chain through an alpha-1,3 glycosidic linkage and participates in surface expression of the sialyl Lewis X (sLe(x)), Lewis X (Le(x)) and non sialylated VIM2 determinants. Moreover transfers fucose to H-type 2 (Fucalpha1-2Galbeta1-4GlcNAc) chain acceptor substrates and participates in difucosylated sialyl Lewis x determinants. Also fucosylates a polylactosamine substrate having a 6 sulfate modification at the GlcNAc moiety and gives rise to sialyl and non-sialyl 6-sulfo lewis X. Does not have activity towards type 1 ((Galbeta1-3GlcNAc)) and H-type 1 chain (Fucalpha1-2Galbeta1-3GlcNAc) acceptors substrates. This Pan troglodytes (Chimpanzee) protein is 4-galactosyl-N-acetylglucosaminide 3-alpha-L-fucosyltransferase FUT6.